A 683-amino-acid chain; its full sequence is Bifunctional lysine-specific demethylase and histidyl-hydroxylase NO66 (683 aa).

Polar residues predominate over residues 1-26 (MHKASTSSANRANFQGNHKTQKSPNN). Disordered regions lie at residues 1 to 162 (MHKA…SPIQ) and 179 to 208 (AAGA…AAKS). Over residues 54-65 (LTKEQKERRKMM) the composition is skewed to basic and acidic residues. Polar residues predominate over residues 85–94 (IDTSASTSNK). The segment covering 95 to 108 (GKSKAARPTDRKRR) has biased composition (basic residues). Residues 116-125 (PADANNNNTK) are compositionally biased toward low complexity. Serine 152 is modified (phosphoserine). Residue threonine 158 is modified to Phosphothreonine. The residue at position 159 (serine 159) is a Phosphoserine. Positions 179–189 (AAGASGASGPA) are enriched in low complexity. One can recognise a JmjC domain in the interval 341 to 480 (NPSTYLVGLR…NLLEKLMPIV (140 aa)). Histidine 381, aspartate 383, and histidine 446 together coordinate Fe cation.

It belongs to the ROX family. NO66 subfamily. Fe(2+) is required as a cofactor.

Its subcellular location is the nucleus. It catalyses the reaction N(6),N(6)-dimethyl-L-lysyl(36)-[histone H3] + 2 2-oxoglutarate + 2 O2 = L-lysyl(36)-[histone H3] + 2 formaldehyde + 2 succinate + 2 CO2. Its function is as follows. Oxygenase that can act as both a histone lysine demethylase and a ribosomal histidine hydroxylase. Specifically demethylates 'Lys-4' (H3K4me) and 'Lys-36' (H3K36me) of histone H3, thereby playing a central role in histone code. This is Bifunctional lysine-specific demethylase and histidyl-hydroxylase NO66 from Drosophila yakuba (Fruit fly).